Reading from the N-terminus, the 309-residue chain is Phosphoserine phosphatase (309 aa).

D97 functions as the Nucleophile in the catalytic mechanism. Mg(2+) contacts are provided by D97 and D99. Residue D99 is the Proton donor of the active site. Residues E106, R142, 186-187, and K232 each bind substrate; that span reads SG. D255 is a Mg(2+) binding site. Residue N258 coordinates substrate.

It belongs to the HAD-like hydrolase superfamily. SerB family. The cofactor is Mg(2+).

The catalysed reaction is O-phospho-L-serine + H2O = L-serine + phosphate. The enzyme catalyses O-phospho-D-serine + H2O = D-serine + phosphate. It functions in the pathway amino-acid biosynthesis; L-serine biosynthesis; L-serine from 3-phospho-D-glycerate: step 3/3. This chain is Phosphoserine phosphatase (SER2), found in Saccharomyces cerevisiae (strain ATCC 204508 / S288c) (Baker's yeast).